We begin with the raw amino-acid sequence, 422 residues long: Signal recognition particle receptor FtsY (422 aa).

Residues 39–86 (PERGVVDRSGGYTASSGITFSQTPTTQPAERIDTSGLPAVGDDATVPR) are disordered. The span at 50–66 (YTASSGITFSQTPTTQP) shows a compositional bias: polar residues. Residues 230–237 (GVNGTGKT), 312–316 (DTAGR), and 374–377 (TKLD) contribute to the GTP site.

The protein belongs to the GTP-binding SRP family. FtsY subfamily. Part of the signal recognition particle protein translocation system, which is composed of SRP and FtsY.

The protein resides in the cell membrane. Its subcellular location is the cytoplasm. The enzyme catalyses GTP + H2O = GDP + phosphate + H(+). Its function is as follows. Involved in targeting and insertion of nascent membrane proteins into the cytoplasmic membrane. Acts as a receptor for the complex formed by the signal recognition particle (SRP) and the ribosome-nascent chain (RNC). The polypeptide is Signal recognition particle receptor FtsY (Mycobacterium bovis (strain ATCC BAA-935 / AF2122/97)).